Consider the following 140-residue polypeptide: Small ribosomal subunit protein uS12 (140 aa).

Positions 1–28 (MPTINQLVRKSRKALEKKSTAPALQKGY) are disordered. D102 is subject to 3-methylthioaspartic acid. The segment at 119 to 140 (GVDKRRQSRSKYGAKRPKEAKK) is disordered. Residues 124 to 140 (RQSRSKYGAKRPKEAKK) show a composition bias toward basic residues.

This sequence belongs to the universal ribosomal protein uS12 family. As to quaternary structure, part of the 30S ribosomal subunit. Contacts proteins S8 and S17. May interact with IF1 in the 30S initiation complex.

With S4 and S5 plays an important role in translational accuracy. In terms of biological role, interacts with and stabilizes bases of the 16S rRNA that are involved in tRNA selection in the A site and with the mRNA backbone. Located at the interface of the 30S and 50S subunits, it traverses the body of the 30S subunit contacting proteins on the other side and probably holding the rRNA structure together. The combined cluster of proteins S8, S12 and S17 appears to hold together the shoulder and platform of the 30S subunit. This chain is Small ribosomal subunit protein uS12, found in Clostridioides difficile (strain 630) (Peptoclostridium difficile).